The chain runs to 178 residues: Caveolin-1 (178 aa).

An N-acetylserine modification is found at S2. Phosphoserine is present on S2. Residues 2-94 (SGGKYVDSEG…WKASFTTFTV (93 aa)) form a required for homooligomerization region. Topologically, residues 2 to 104 (SGGKYVDSEG…TKYWFYRLLS (103 aa)) are cytoplasmic. K5 is subject to N6-acetyllysine; alternate. K5 participates in a covalent cross-link: Glycyl lysine isopeptide (Lys-Gly) (interchain with G-Cter in ubiquitin); alternate. A Phosphotyrosine modification is found at Y6. Residue S9 is modified to Phosphoserine. Phosphotyrosine; by ABL1 is present on Y14. Y25 is modified (phosphotyrosine). Glycyl lysine isopeptide (Lys-Gly) (interchain with G-Cter in ubiquitin) cross-links involve residues K26, K30, K39, K47, and K57. An interaction with CAVIN3 region spans residues 82-94 (DGIWKASFTTFTV). Residues 105 to 125 (TIFGIPMALIWGIYFAILSFL) constitute an intramembrane region (helical). At 126–178 (HIWAVVPCIKSFLIEIQCISRVYSIYVHTFCDPLFEAIGKIFSNVRISMQKEI) the chain is on the cytoplasmic side. An interacts with SPRY1, SPRY2, SPRY3 and SPRY4 region spans residues 131-142 (VPCIKSFLIEIQ). 3 S-palmitoyl cysteine lipidation sites follow: C133, C143, and C156. The interval 149–160 (SIYVHTFCDPLF) is interacts with SPRY1, SPRY2, and SPRY4. Residues 167 to 178 (FSNVRISMQKEI) form an interacts with SPRY1, SPRY2, SPRY3 and SPRY4 region.

This sequence belongs to the caveolin family. As to quaternary structure, homooligomer. Interacts with GLIPR2. Interacts with NOSTRIN. Interacts with SNAP25 and STX1A. Interacts (via the N-terminus) with DPP4; the interaction is direct. Interacts with CTNNB1, CDH1 and JUP. Interacts with PACSIN2; this interaction induces membrane tubulation. Interacts with SLC7A9. Interacts with BMX and BTK. Interacts with TGFBR1. Interacts with CAVIN3 (via leucine-zipper domain) in a cholesterol-sensitive manner. Interacts with CAVIN1. Interacts with EHD2 in a cholesterol-dependent manner. Forms a ternary complex with UBXN6 and VCP; mediates CAV1 targeting to lysosomes for degradation. Interacts with ABCG1; this interaction regulates ABCG1-mediated cholesterol efflux. Interacts with NEU3; this interaction enhances NEU3 sialidase activity within caveola. Interacts (via C-terminus) with SPRY1, SPRY2 (via C-terminus), SPRY3, and SPRY4. Interacts with IGFBP5; this interaction allows trafficking of IGFBP5 from the plasma membrane to the nucleus. In terms of processing, phosphorylated at Tyr-14 by ABL1 in response to oxidative stress. Ubiquitinated. Undergo monoubiquitination and multi- and/or polyubiquitination. Monoubiquitination of N-terminal lysines promotes integration in a ternary complex with UBXN6 and VCP which promotes oligomeric CAV1 targeting to lysosomes for degradation. Ubiquitinated by ZNRF1; leading to degradation and modulation of the TLR4-mediated immune response.

It is found in the golgi apparatus membrane. The protein localises to the cell membrane. The protein resides in the membrane. Its subcellular location is the caveola. It localises to the membrane raft. May act as a scaffolding protein within caveolar membranes. Forms a stable heterooligomeric complex with CAV2 that targets to lipid rafts and drives caveolae formation. Mediates the recruitment of CAVIN proteins (CAVIN1/2/3/4) to the caveolae. Interacts directly with G-protein alpha subunits and can functionally regulate their activity. Involved in the costimulatory signal essential for T-cell receptor (TCR)-mediated T-cell activation. Its binding to DPP4 induces T-cell proliferation and NF-kappa-B activation in a T-cell receptor/CD3-dependent manner. Recruits CTNNB1 to caveolar membranes and may regulate CTNNB1-mediated signaling through the Wnt pathway. Negatively regulates TGFB1-mediated activation of SMAD2/3 by mediating the internalization of TGFBR1 from membrane rafts leading to its subsequent degradation. Binds 20(S)-hydroxycholesterol (20(S)-OHC). The polypeptide is Caveolin-1 (CAV1) (Oryctolagus cuniculus (Rabbit)).